A 555-amino-acid polypeptide reads, in one-letter code: Glutamine--tRNA ligase (555 aa).

The short motif at 34 to 44 is the 'HIGH' region element; it reads PEPNGYLHIGH. Residues 35 to 37 and 41 to 47 each bind ATP; these read EPN and HIGHAKS. L-glutamine contacts are provided by D67 and Y212. ATP-binding positions include T231, 261 to 262, and 269 to 271; these read RL and MSK. The short motif at 268–272 is the 'KMSKS' region element; it reads VMSKR. The interval 317–324 is interaction with tRNA; that stretch reads TKQDNTIE.

It belongs to the class-I aminoacyl-tRNA synthetase family. In terms of assembly, monomer.

Its subcellular location is the cytoplasm. It carries out the reaction tRNA(Gln) + L-glutamine + ATP = L-glutaminyl-tRNA(Gln) + AMP + diphosphate. This Salmonella newport (strain SL254) protein is Glutamine--tRNA ligase.